The primary structure comprises 1114 residues: Proto-oncogene tyrosine-protein kinase receptor Ret (1114 aa).

An N-terminal signal peptide occupies residues Met-1–Gly-28. The cadherin-like region 1 (CLD1) stretch occupies residues Leu-29–Ser-153. Over Leu-29–Arg-635 the chain is Extracellular. Asn-98 is a glycosylation site (N-linked (GlcNAc...) asparagine). Cys-137 and Cys-142 are oxidised to a cystine. The N-linked (GlcNAc...) asparagine glycan is linked to Asn-151. Cystine bridges form between Cys-157-Cys-197 and Cys-166-Cys-243. In terms of domain architecture, Cadherin spans Pro-168–Phe-272. Positions 178 and 179 each coordinate Ca(2+). Asn-199 is a glycosylation site (N-linked (GlcNAc...) asparagine). Residues Asp-230, Glu-232, Asp-264, Glu-265, Asp-266, Asp-267, Ser-268, Asp-300, and Asp-302 each coordinate Ca(2+). Residues Glu-265 to Ser-379 form a cadherin-like region 3 (CLD3) region. N-linked (GlcNAc...) asparagine glycans are attached at residues Asn-336, Asn-343, Asn-361, Asn-367, and Asn-377. Asp-378 contributes to the Ca(2+) binding site. N-linked (GlcNAc...) asparagine glycosylation occurs at Asn-394. The cadherin-like region 4 (CLD4) stretch occupies residues Pro-405–Gly-506. Cys-426 and Cys-430 are disulfide-bonded. N-linked (GlcNAc...) asparagine glycans are attached at residues Asn-448 and Asn-468. Cystine bridges form between Cys-449/Cys-478, Cys-515/Cys-531, Cys-519/Cys-541, and Cys-528/Cys-558. A glycan (N-linked (GlcNAc...) asparagine) is linked at Asn-554. 6 residues coordinate Ca(2+): Thr-564, Cys-565, Asp-567, His-569, Glu-574, and Asp-584. Disulfide bonds link Cys-565/Cys-581, Cys-570/Cys-585, Cys-609/Cys-620, Cys-611/Cys-618, and Cys-630/Cys-634. A helical transmembrane segment spans residues Thr-636–Ile-657. Residues His-658–Ser-1114 are Cytoplasmic-facing. The residue at position 687 (Tyr-687) is a Phosphotyrosine; by autocatalysis. The O-linked (GlcNAc) serine glycan is linked to Ser-688. The residue at position 696 (Ser-696) is a Phosphoserine. The Protein kinase domain maps to Leu-724–Leu-1016. ATP contacts are provided by residues Leu-730–Val-738 and Lys-758. Glu-805–Ala-807 is a semaxanib binding site. 3 positions are modified to phosphotyrosine; by autocatalysis: Tyr-806, Tyr-809, and Tyr-826. Catalysis depends on Asp-874, which acts as the Proton acceptor. Residues Tyr-900, Tyr-905, Tyr-981, Tyr-1015, Tyr-1029, Tyr-1062, Tyr-1090, and Tyr-1096 each carry the phosphotyrosine; by autocatalysis modification.

It belongs to the protein kinase superfamily. Tyr protein kinase family. As to quaternary structure, phosphorylated form interacts with the PBT domain of DOK2, DOK4 and DOK5. The phosphorylated form interacts with PLCG1 and GRB7. Interacts (not phosphorylated) with PTK2/FAK1 (via FERM domain). Extracellular cell-membrane anchored RET cadherin fragments form complex in neurons with reduced trophic status, preferentially at the contact sites between somas. Interacts with AIP in the pituitary gland; this interaction prevents the formation of the AIP-survivin complex. Interacts (inactive) with CBLC and CD2AP; dissociates upon activation by GDNF which increases CBLC:CD2AP interaction. The cofactor is Ca(2+). Post-translationally, autophosphorylated on C-terminal tyrosine residues upon ligand stimulation. Proteolytically cleaved by caspase-3. The soluble RET kinase fragment is able to induce cell death. The extracellular cell-membrane anchored RET cadherin fragment accelerates cell adhesion in sympathetic neurons.

Its subcellular location is the cell membrane. The protein resides in the endosome membrane. The catalysed reaction is L-tyrosyl-[protein] + ATP = O-phospho-L-tyrosyl-[protein] + ADP + H(+). With respect to regulation, repressed by 4-(3-hydroxyanilino)-quinolines derivatives, indolin-2-one-derivatives, 2-(alkylsulfanyl)-4-(3-thienyl) nicotinonitrile analogs, 3- and 4-substituted beta-carbolin-1-ones, vandetanib, motesanib, sorafenib (BAY 43-9006), cabozantinib (XL184), lenvatinib, sunitinib, nintedanib, and withaferin A (WA). Inactivation by sorafenib both reduces kinase activity and promotes lysosomal degradation. In terms of biological role, receptor tyrosine-protein kinase involved in numerous cellular mechanisms including cell proliferation, neuronal navigation, cell migration, and cell differentiation in response to glia cell line-derived growth family factors (GDNF, NRTN, ARTN, PSPN and GDF15). In contrast to most receptor tyrosine kinases, RET requires not only its cognate ligands but also coreceptors, for activation. GDNF ligands (GDNF, NRTN, ARTN, PSPN and GDF15) first bind their corresponding GDNFR coreceptors (GFRA1, GFRA2, GFRA3, GFRA4 and GFRAL, respectively), triggering RET autophosphorylation and activation, leading to activation of downstream signaling pathways, including the MAPK- and AKT-signaling pathways. Acts as a dependence receptor via the GDNF-GFRA1 signaling: in the presence of the ligand GDNF in somatotrophs within pituitary, promotes survival and down regulates growth hormone (GH) production, but triggers apoptosis in absence of GDNF. Required for the molecular mechanisms orchestration during intestine organogenesis via the ARTN-GFRA3 signaling: involved in the development of enteric nervous system and renal organogenesis during embryonic life, and promotes the formation of Peyer's patch-like structures, a major component of the gut-associated lymphoid tissue. Mediates, through interaction with GDF15-receptor GFRAL, GDF15-induced cell-signaling in the brainstem which triggers an aversive response, characterized by nausea, vomiting, and/or loss of appetite in response to various stresses. Modulates cell adhesion via its cleavage by caspase in sympathetic neurons and mediates cell migration in an integrin (e.g. ITGB1 and ITGB3)-dependent manner. Also active in the absence of ligand, triggering apoptosis through a mechanism that requires receptor intracellular caspase cleavage. Triggers the differentiation of rapidly adapting (RA) mechanoreceptors. Involved in the development of the neural crest. Regulates nociceptor survival and size. Phosphorylates PTK2/FAK1. Isoform 1 in complex with GFRAL induces higher activation of MAPK-signaling pathway than isoform 2 in complex with GFRAL. The polypeptide is Proto-oncogene tyrosine-protein kinase receptor Ret (Homo sapiens (Human)).